Here is a 314-residue protein sequence, read N- to C-terminus: tRNA pseudouridine synthase B (314 aa).

The active-site Nucleophile is Asp47.

It belongs to the pseudouridine synthase TruB family. Type 1 subfamily.

The catalysed reaction is uridine(55) in tRNA = pseudouridine(55) in tRNA. In terms of biological role, responsible for synthesis of pseudouridine from uracil-55 in the psi GC loop of transfer RNAs. This chain is tRNA pseudouridine synthase B, found in Vibrio parahaemolyticus serotype O3:K6 (strain RIMD 2210633).